Consider the following 1943-residue polypeptide: Trichohyalin (1943 aa).

Residues 1 to 91 (MSPLLRSICD…AQACYYALGQ (91 aa)) are S-100-like. 2 EF-hand domains span residues 23–48 (CDGA…LRRP) and 49–84 (HDPK…VAQA). Residues D32, D62, D64, N66, R68, and E73 each coordinate Ca(2+). Disordered regions lie at residues 110-164 (LQDR…LEQR), 186-209 (RRAE…DEEQ), and 222-274 (GREE…LQEE). Residues 197-209 (KGHETEEFPDEEQ) show a composition bias toward basic and acidic residues. Residues 314–326 (RREQQEERREQQE) form a 1-1; approximate repeat. Positions 314–377 (RREQQEERRE…QEEERREQQL (64 aa)) are 5 X 13 AA tandem repeats of R-R-E-Q-E-E-E-R-R-E-Q-Q-L. One copy of the 1-2; approximate repeat lies at 327-339 (RREQQEERREQQL). The 1-3; approximate repeat unit spans residues 340–351 (RREQEERREQQL). 10 tandem repeats follow at residues 352–364 (RREQ…EQQL), 365–377 (RREQ…EQQL), 378–383 (RREQQL), 384–389 (RREQQL), 390–395 (RREQQL), 396–401 (RREQQL), 402–407 (RREQQL), 408–413 (RREQQL), 414–419 (RREQQL), and 420–425 (RREQQL). The segment at 378–425 (RREQQLRREQQLRREQQLRREQQLRREQQLRREQQLRREQQLRREQQL) is 8 X 6 AA tandem repeats of R-R-E-Q-Q-L. The tract at residues 425 to 683 (LRREQEEERH…REHEEERREQ (259 aa)) is 9 X 28 AA approximate tandem repeats. Disordered stretches follow at residues 426–485 (RREQ…EERR), 509–546 (REQE…EERR), 608–819 (ERLE…EKEQ), and 837–872 (EEQL…RRDQ). Basic and acidic residues-rich tracts occupy residues 608-684 (ERLE…REQE), 724-781 (RKQE…ERGR), 789-812 (PLRE…RFLP), and 859-872 (DQER…RRDQ). Repeat copies occupy residues 906–935 (LQEE…EEEQ), 936–965 (LQQE…KDKK), 966–995 (LQQK…EEEE), 996–1025 (LQQE…KKDE), 1026–1055 (LQQE…EEEE), 1056–1085 (LQQE…KEEE), 1086–1115 (LQQE…EEEE), 1116–1145 (LQQE…EEEE), 1146–1175 (VQQE…EEEE), and 1176–1204 (LQQE…EEEE). A 10 X 30 AA tandem repeats region spans residues 906–1204 (LQEEEEELQR…RERQYREEEE (299 aa)). Residues 950 to 992 (KRRRQERERQYRKDKKLQQKEEQLLGEEPEKRRRQEREKKYRE) are compositionally biased toward basic and acidic residues. 9 disordered regions span residues 950–1000 (KRRR…QQEE), 1046–1120 (RERQ…QQEE), 1137–1162 (ERQY…EKRR), 1193–1371 (QERE…RHQE), 1404–1435 (REQQ…FREE), 1492–1691 (QQLR…ERDR), 1757–1820 (PERE…RDGK), 1834–1864 (EQRL…EQEL), and 1876–1928 (RERK…VRSS). Positions 1052–1064 (EEEELQQEEEQLL) are enriched in acidic residues. 2 stretches are compositionally biased toward basic and acidic residues: residues 1065-1085 (GEER…KEEE) and 1092-1111 (QLLR…RQCR). The segment covering 1142-1151 (EEEEVQQEEE) has biased composition (acidic residues). The span at 1152 to 1162 (QLLREEPEKRR) shows a compositional bias: basic and acidic residues. 2 stretches are compositionally biased toward basic and acidic residues: residues 1214 to 1263 (YRDE…DRQS) and 1274 to 1371 (QQER…RHQE). Positions 1292 to 1894 (HFPEEEQLER…IRRQQKEEQR (603 aa)) are 23 X 26 AA approximate tandem repeats. 3 stretches are compositionally biased toward basic and acidic residues: residues 1492 to 1524 (QQLR…EQQL), 1533 to 1673 (FLQE…REEE), and 1682 to 1691 (QQLRRQERDR). Positions 1876 to 1912 (RERKLREEHIRRQQKEEQRHRQVGEIKSQEGKGHGRL) are enriched in basic and acidic residues.

Belongs to the S100-fused protein family. In terms of assembly, monomer. Post-translationally, substrate of transglutaminase. Some 200 arginines are probably converted to citrullines by peptidylarginine deimidase. In terms of tissue distribution, found in the hard keratinizing tissues such as the inner root sheath (IRS) of hair follicles and medulla, and in the filiform papillae of dorsal tongue epithelium.

Its function is as follows. Intermediate filament-associated protein that associates in regular arrays with keratin intermediate filaments (KIF) of the inner root sheath cells of the hair follicle and the granular layer of the epidermis. It later becomes cross-linked to KIF by isodipeptide bonds. It may serve as scaffold protein, together with involucrin, in the organization of the cell envelope or even anchor the cell envelope to the KIF network. It may be involved in its own calcium-dependent postsynthetic processing during terminal differentiation. The sequence is that of Trichohyalin (TCHH) from Homo sapiens (Human).